Consider the following 40-residue polypeptide: Neutral phospholipase A2 homolog cannitoxin beta chain 2 (40 aa).

Heterotrimer of alpha, beta, and gamma chains; non-covalently linked. In terms of tissue distribution, expressed by the venom gland.

It localises to the secreted. In terms of biological role, heterotrimer: Snake venom phospholipase A2 (PLA2) heterotrimer that acts as a potent presynaptic neurotoxin by blocking synaptic transmission and synaptic vesicle recycling. Enzymatic activity is essential for the neurotoxic effects. May act by binding in a calcium-dependent fashion to neurotonal pentraxin-1 (NPTX1) and neurotonal pentraxin-2 (NPTX2), but not to neuronal pentraxin receptor (NPTXR). Also binds to taipoxin-associated calcium binding protein 49 (RCN2), a protein localized in the lumen of endoplasmic reticulum. Functionally, monomer (beta chain): Snake venom phospholipase A2 homolog that is neither toxic nor enzymatically active. Does not bind calcium. The protein is Neutral phospholipase A2 homolog cannitoxin beta chain 2 of Oxyuranus scutellatus canni (Papuan taipan).